Reading from the N-terminus, the 61-residue chain is Translational regulator CsrA (61 aa).

This sequence belongs to the CsrA/RsmA family. As to quaternary structure, homodimer; the beta-strands of each monomer intercalate to form a hydrophobic core, while the alpha-helices form wings that extend away from the core.

The protein localises to the cytoplasm. Functionally, a key translational regulator that binds mRNA to regulate translation initiation and/or mRNA stability. Mediates global changes in gene expression, shifting from rapid growth to stress survival by linking envelope stress, the stringent response and the catabolite repression systems. Usually binds in the 5'-UTR; binding at or near the Shine-Dalgarno sequence prevents ribosome-binding, repressing translation, binding elsewhere in the 5'-UTR can activate translation and/or stabilize the mRNA. Its function is antagonized by small RNA(s). This is Translational regulator CsrA from Glaesserella parasuis serovar 5 (strain SH0165) (Haemophilus parasuis).